Here is an 83-residue protein sequence, read N- to C-terminus: Large ribosomal subunit protein eL43 (83 aa).

Cysteine 38, cysteine 41, cysteine 56, and cysteine 59 together coordinate Zn(2+). A C4-type zinc finger spans residues 38–59; the sequence is CPVCGRRAVRRISTGIWQCKKC.

This sequence belongs to the eukaryotic ribosomal protein eL43 family. Putative zinc-binding subfamily. In terms of assembly, part of the 50S ribosomal subunit. Zn(2+) is required as a cofactor.

Functionally, binds to the 23S rRNA. This chain is Large ribosomal subunit protein eL43, found in Pyrococcus abyssi (strain GE5 / Orsay).